Consider the following 196-residue polypeptide: Small ribosomal subunit protein uS4c (196 aa).

The tract at residues 15–43 is disordered; the sequence is LGALPGLTRKTPKSGSNQKKKFHSGKKEQ. The S4 RNA-binding domain maps to 89–150; sequence MRLDNILFRL…NQRSKRLVQN (62 aa).

The protein belongs to the universal ribosomal protein uS4 family. Part of the 30S ribosomal subunit. Contacts protein S5. The interaction surface between S4 and S5 is involved in control of translational fidelity.

Its subcellular location is the plastid. It localises to the chloroplast. Functionally, one of the primary rRNA binding proteins, it binds directly to 16S rRNA where it nucleates assembly of the body of the 30S subunit. In terms of biological role, with S5 and S12 plays an important role in translational accuracy. The protein is Small ribosomal subunit protein uS4c (rps4) of Bothriochloa ischaemum (Yellow bluestem).